The primary structure comprises 319 residues: Methionyl-tRNA formyltransferase (319 aa).

A (6S)-5,6,7,8-tetrahydrofolate-binding site is contributed by 113–116; the sequence is SLLP.

The protein belongs to the Fmt family.

The enzyme catalyses L-methionyl-tRNA(fMet) + (6R)-10-formyltetrahydrofolate = N-formyl-L-methionyl-tRNA(fMet) + (6S)-5,6,7,8-tetrahydrofolate + H(+). Its function is as follows. Attaches a formyl group to the free amino group of methionyl-tRNA(fMet). The formyl group appears to play a dual role in the initiator identity of N-formylmethionyl-tRNA by promoting its recognition by IF2 and preventing the misappropriation of this tRNA by the elongation apparatus. The sequence is that of Methionyl-tRNA formyltransferase from Pseudomonas fluorescens (strain Pf0-1).